A 309-amino-acid polypeptide reads, in one-letter code: NAD kinase (309 aa).

The active-site Proton acceptor is the Asp-89. NAD(+) is bound by residues 89 to 90 (DG), 163 to 164 (NE), His-174, Arg-191, Asp-193, and 204 to 209 (TAYALS).

Belongs to the NAD kinase family. A divalent metal cation is required as a cofactor.

It localises to the cytoplasm. It carries out the reaction NAD(+) + ATP = ADP + NADP(+) + H(+). Involved in the regulation of the intracellular balance of NAD and NADP, and is a key enzyme in the biosynthesis of NADP. Catalyzes specifically the phosphorylation on 2'-hydroxyl of the adenosine moiety of NAD to yield NADP. In Shewanella sp. (strain W3-18-1), this protein is NAD kinase.